Consider the following 902-residue polypeptide: MDLTDDSPDGEVKIHKKDFHHPYTPYPIQEKFMQTVYDVLEQGKIGILESPTGTGKSLSLICGSLTWLRDFKRKEFEGILNDGFENSEEPEWMIEAAKVRKKRELIGRREEMERKLGRIRERERCERDRMSGNGNGNMRGGKRRKVGGDGEGDLVGGSNGSNEDEFLLEDWESDGEIGGSGKKKTGDEAIFSKETLELKKSIGMWKFPSPMPLEEFPSKTTEKDKDNLHEHLRHLPLGSRKNLCINPKVNKLNSVTAINERCAELQQSSTPKEHKCPHLPNKDNKPLVSTFRDHALATIRDIEDMGALGKEISICPYYASRSAIKPAEIVTLPYPLLLQKSAREALGISLKGHVVIIDEAHNLMDAIAGIYGTEMSLKELKLAKEMLGNYFMKFAKRLKGKNRIYVAQAIRVVDSLMGYLMKRLEGTEIDGVVDQKELLAGKGADQIDLFKLIRYLQESKLARKVESYTEHTRNIKQASTIPHNNKETPKSTTPILHTLTSLLLALTHPTTEGQLFFLKSTSTSPSPSPDLITLKFQLLNPAPHFESIVSSARAIILAGGTMSPFSDYTSILFPSIPSHKITTLSCGHVIPKTHLFASTVSRGPTGIPFKWTFANRGNTDMMDELGRVLLNVCTIVPDGVVVFFPSYNFLSTILYRFSIPSSGTGSATATATGTEKGKGKTILERLSEKKPIFQESKEESVETILAAYAKSIAEGKGALLFSVVGGKLSEGINFSDALGRCVMIVGLPFPNMHTAEWKRRLRFIEESAVERLTSFYQEKESNNKDGNGNEEEGNGKKKENREKIQRDQILQQAKGEARDYFENVCMRAVNQCVGRAIRHRGDWAGILLLDERYKGERVVGKLAGWIREGVLRGEGMGMGDAGGFGRLMGGLGRFCRGRREVL.

In terms of domain architecture, Helicase ATP-binding spans 15–414; that stretch reads HKKDFHHPYT…YVAQAIRVVD (400 aa). 50-57 provides a ligand contact to ATP; that stretch reads SPTGTGKS. The interval 128 to 162 is disordered; that stretch reads DRMSGNGNGNMRGGKRRKVGGDGEGDLVGGSNGSN. 4 residues coordinate [4Fe-4S] cluster: C244, C262, C276, and C315. The DEAH box motif lies at 358–361; that stretch reads DEAH. Residues 775-804 are disordered; the sequence is FYQEKESNNKDGNGNEEEGNGKKKENREKI. Positions 793–804 are enriched in basic and acidic residues; it reads GNGKKKENREKI.

This sequence belongs to the DEAD box helicase family. DEAH subfamily. DDX11/CHL1 sub-subfamily. The cofactor is [4Fe-4S] cluster.

Its subcellular location is the nucleus. It catalyses the reaction Couples ATP hydrolysis with the unwinding of duplex DNA at the replication fork by translocating in the 5'-3' direction. This creates two antiparallel DNA single strands (ssDNA). The leading ssDNA polymer is the template for DNA polymerase III holoenzyme which synthesizes a continuous strand.. The catalysed reaction is ATP + H2O = ADP + phosphate + H(+). In terms of biological role, ATP-dependent DNA helicase important for chromosome transmission and normal cell cycle progression in G(2)/M. May have a role in changing DNA topology to allow the loading of proteins involved in maintaining sister chromatid cohesion in the vicinity of the centromeres. Has a specific role in chromosome segregation during meiosis II. The chain is ATP-dependent DNA helicase CHL1 (CHL1) from Sclerotinia sclerotiorum (strain ATCC 18683 / 1980 / Ss-1) (White mold).